A 52-amino-acid chain; its full sequence is MAVPKKRTSISKKRIRKNIWKRKGYWTSLKAFSLGKSLSTGNSKSFFVQQNK.

The protein belongs to the bacterial ribosomal protein bL32 family.

It is found in the plastid. The protein resides in the chloroplast. This Capsella bursa-pastoris (Shepherd's purse) protein is Large ribosomal subunit protein bL32c.